A 231-amino-acid polypeptide reads, in one-letter code: uncharacterized protein (231 aa).

An RCK N-terminal domain is found at 3-119 (RADFCIIGLG…RTMGIREALI (117 aa)). In terms of domain architecture, RCK C-terminal spans 134 to 221 (HGMETEIINL…VNQYLRYINP (88 aa)).

This is an uncharacterized protein from Mycoplasma pneumoniae (strain ATCC 29342 / M129 / Subtype 1) (Mycoplasmoides pneumoniae).